The sequence spans 439 residues: FBD-associated F-box protein At5g56380 (439 aa).

Positions 1 to 61 constitute an F-box domain; that stretch reads MDRISHLADE…LPETWGYQEP (61 aa). Residues 358 to 406 enclose the FBD domain; the sequence is WNQPGSVPRCLSSSLETLEWVEYGGTHEEKELSTYLFKTAVCFKKASFT.

The polypeptide is FBD-associated F-box protein At5g56380 (Arabidopsis thaliana (Mouse-ear cress)).